We begin with the raw amino-acid sequence, 298 residues long: HTH-type transcriptional regulator ArgP (298 aa).

Residues 4 to 60 enclose the HTH lysR-type domain; it reads LDYRWIEALDSVVSKGSFERAAEQLFISQSAVSQRIKQLEKYLAQPVLIREQPPRPT. Residues 21–40 constitute a DNA-binding region (H-T-H motif); the sequence is FERAAEQLFISQSAVSQRIK.

Belongs to the LysR transcriptional regulatory family. In terms of assembly, homodimer.

Its function is as follows. Controls the transcription of genes involved in arginine and lysine metabolism. The protein is HTH-type transcriptional regulator ArgP of Vibrio cholerae serotype O1 (strain ATCC 39541 / Classical Ogawa 395 / O395).